The following is a 238-amino-acid chain: Sugar fermentation stimulation protein homolog (238 aa).

This sequence belongs to the SfsA family.

The polypeptide is Sugar fermentation stimulation protein homolog (Vibrio vulnificus (strain YJ016)).